The chain runs to 151 residues: Putative pre-16S rRNA nuclease (151 aa).

Belongs to the YqgF nuclease family.

The protein localises to the cytoplasm. Functionally, could be a nuclease involved in processing of the 5'-end of pre-16S rRNA. This is Putative pre-16S rRNA nuclease from Neisseria meningitidis serogroup B (strain ATCC BAA-335 / MC58).